Consider the following 399-residue polypeptide: uncharacterized protein (399 aa).

A compositionally biased stretch (polar residues) spans 197-206; sequence ENSSASSVTS. The interval 197–224 is disordered; sequence ENSSASSVTSEECEQDVMDEQSAEDNEE. Acidic residues predominate over residues 207–224; it reads EECEQDVMDEQSAEDNEE.

This is an uncharacterized protein from Diadromus pulchellus (Parasitic wasp).